The sequence spans 188 residues: Peptidyl-tRNA hydrolase (188 aa).

Residue Tyr-14 participates in tRNA binding. His-19 functions as the Proton acceptor in the catalytic mechanism. TRNA is bound by residues Tyr-64, Asn-66, and Asn-112.

This sequence belongs to the PTH family. Monomer.

The protein localises to the cytoplasm. The catalysed reaction is an N-acyl-L-alpha-aminoacyl-tRNA + H2O = an N-acyl-L-amino acid + a tRNA + H(+). Hydrolyzes ribosome-free peptidyl-tRNAs (with 1 or more amino acids incorporated), which drop off the ribosome during protein synthesis, or as a result of ribosome stalling. Functionally, catalyzes the release of premature peptidyl moieties from peptidyl-tRNA molecules trapped in stalled 50S ribosomal subunits, and thus maintains levels of free tRNAs and 50S ribosomes. Releases Ala-tailed nascent peptides from stalled 50S ribosomal subunits. Non-templated Ala tailing occurs as part of the ribosome quality control (RQC) pathway. In the absence of Ala tails significantly less peptide release occurs. The Ala tail facilitates the interaction of Pth with the nascent peptide-tRNA ester bond as well as promoting nascent chain degradation; 3 Ala residues suffice to stimulate peptide release from stalled 50S ribosomal subunits. Complements a temperature-sensitive pth mutation in E.coli. In Bacillus subtilis (strain 168), this protein is Peptidyl-tRNA hydrolase.